A 327-amino-acid polypeptide reads, in one-letter code: Phenylalanine--tRNA ligase alpha subunit (327 aa).

E252 is a binding site for Mg(2+).

Belongs to the class-II aminoacyl-tRNA synthetase family. Phe-tRNA synthetase alpha subunit type 1 subfamily. Tetramer of two alpha and two beta subunits. Mg(2+) serves as cofactor.

It is found in the cytoplasm. The enzyme catalyses tRNA(Phe) + L-phenylalanine + ATP = L-phenylalanyl-tRNA(Phe) + AMP + diphosphate + H(+). The sequence is that of Phenylalanine--tRNA ligase alpha subunit from Photobacterium profundum (strain SS9).